The primary structure comprises 285 residues: Probable enoyl-CoA hydratase echA12 (285 aa).

Belongs to the enoyl-CoA hydratase/isomerase family.

It carries out the reaction a (3S)-3-hydroxyacyl-CoA = a (2E)-enoyl-CoA + H2O. The enzyme catalyses a 4-saturated-(3S)-3-hydroxyacyl-CoA = a (3E)-enoyl-CoA + H2O. In terms of biological role, could possibly oxidize fatty acids using specific components. This is Probable enoyl-CoA hydratase echA12 (echA12) from Mycobacterium bovis (strain ATCC BAA-935 / AF2122/97).